The sequence spans 826 residues: 1,4-alpha-glucan-branching enzyme 1, chloroplastic/amyloplastic (826 aa).

The N-terminal 58 residues, 1 to 58, are a transit peptide targeting the chloroplast; sequence ATTTTTTHNSKNKQYLAKQKPVELTLGYQNPNGCKVCSFGSKGSIYQKVSSGFKGVSV. D409 acts as the Nucleophile in catalysis. E464 acts as the Proton donor in catalysis. The disordered stretch occupies residues 782–813; that stretch reads DTDVARIPDVSMESEDSNLDRIEDNSEDAVDA.

This sequence belongs to the glycosyl hydrolase 13 family. GlgB subfamily. As to quaternary structure, monomer. As to expression, expressed in roots, leaves, stipules, pods and flowers.

The protein localises to the plastid. It localises to the chloroplast. The protein resides in the amyloplast. It carries out the reaction Transfers a segment of a (1-&gt;4)-alpha-D-glucan chain to a primary hydroxy group in a similar glucan chain.. Its pathway is glycan biosynthesis; starch biosynthesis. Catalyzes the formation of the alpha-1,6-glucosidic linkages in starch by scission of a 1,4-alpha-linked oligosaccharide from growing alpha-1,4-glucan chains and the subsequent attachment of the oligosaccharide to the alpha-1,6 position. May preferentially transfer long chains during branching. This chain is 1,4-alpha-glucan-branching enzyme 1, chloroplastic/amyloplastic (SBEII), found in Pisum sativum (Garden pea).